The following is a 127-amino-acid chain: MSNLPAGLKYAKTHEWARLEADGTVKVGISDHAQEALGDLVYLELPAVGRRVHAGEACAVVESVKAAADVNSPLSGEIVARNEALADAPERVNQSPYEAWLFAVRPDDIGEMDQLLDAEGYRTIAEE.

The Lipoyl-binding domain maps to 24–105 (TVKVGISDHA…PYEAWLFAVR (82 aa)). Lys65 carries the N6-lipoyllysine modification.

The protein belongs to the GcvH family. As to quaternary structure, the glycine cleavage system is composed of four proteins: P, T, L and H. It depends on (R)-lipoate as a cofactor.

Its function is as follows. The glycine cleavage system catalyzes the degradation of glycine. The H protein shuttles the methylamine group of glycine from the P protein to the T protein. This is Glycine cleavage system H protein from Methylococcus capsulatus (strain ATCC 33009 / NCIMB 11132 / Bath).